A 199-amino-acid chain; its full sequence is Holliday junction branch migration complex subunit RuvA (199 aa).

The interval 1-63 (MIGCLIGEVF…EDAQQLYGFS (63 aa)) is domain I. The tract at residues 64 to 142 (DAQEKTIFRT…TLAQGTSSAA (79 aa)) is domain II. The interval 143–150 (ALPQIQFV) is flexible linker. A domain III region spans residues 150–199 (VSNSPVAEAEAALQSLGYKPLEAQKAVAAVKADYTESADIIRAALKSMMK).

The protein belongs to the RuvA family. Homotetramer. Forms an RuvA(8)-RuvB(12)-Holliday junction (HJ) complex. HJ DNA is sandwiched between 2 RuvA tetramers; dsDNA enters through RuvA and exits via RuvB. An RuvB hexamer assembles on each DNA strand where it exits the tetramer. Each RuvB hexamer is contacted by two RuvA subunits (via domain III) on 2 adjacent RuvB subunits; this complex drives branch migration. In the full resolvosome a probable DNA-RuvA(4)-RuvB(12)-RuvC(2) complex forms which resolves the HJ.

The protein resides in the cytoplasm. Its function is as follows. The RuvA-RuvB-RuvC complex processes Holliday junction (HJ) DNA during genetic recombination and DNA repair, while the RuvA-RuvB complex plays an important role in the rescue of blocked DNA replication forks via replication fork reversal (RFR). RuvA specifically binds to HJ cruciform DNA, conferring on it an open structure. The RuvB hexamer acts as an ATP-dependent pump, pulling dsDNA into and through the RuvAB complex. HJ branch migration allows RuvC to scan DNA until it finds its consensus sequence, where it cleaves and resolves the cruciform DNA. The sequence is that of Holliday junction branch migration complex subunit RuvA from Acinetobacter baumannii (strain AB307-0294).